The chain runs to 237 residues: Large ribosomal subunit protein uL1 (237 aa).

This sequence belongs to the universal ribosomal protein uL1 family. In terms of assembly, part of the 50S ribosomal subunit.

Functionally, binds directly to 23S rRNA. The L1 stalk is quite mobile in the ribosome, and is involved in E site tRNA release. In terms of biological role, protein L1 is also a translational repressor protein, it controls the translation of the L11 operon by binding to its mRNA. The polypeptide is Large ribosomal subunit protein uL1 (Nocardia farcinica (strain IFM 10152)).